The primary structure comprises 43 residues: uncharacterized protein (43 aa).

An N-terminal signal peptide occupies residues Met-1 to Ser-16. Asn-37 is a glycosylation site (N-linked (GlcNAc...) asparagine; by host).

This is an uncharacterized protein from Acheta domesticus (House cricket).